The chain runs to 413 residues: Multidrug resistance protein MdtA (413 aa).

Residues 1 to 25 (MKNKRRTYFFQFAVLAVVIATAYFA) form the signal peptide. The disordered stretch occupies residues 394–413 (ANTYDQMDKSKPSNSKVENT).

The protein belongs to the membrane fusion protein (MFP) (TC 8.A.1) family. Part of a tripartite efflux system composed of MdtA, MdtB and MdtC.

It is found in the cell inner membrane. This is Multidrug resistance protein MdtA from Xenorhabdus bovienii (strain SS-2004) (Xenorhabdus nematophila subsp. bovienii).